The primary structure comprises 33 residues: GLLDTLKNMAINAAKGAGQSVLNTLSCKLSKTC.

A disulfide bridge links C27 with C33.

As to expression, expressed by the skin glands.

It localises to the secreted. Has antibacterial activity against the Gram-positive bacterium S.aureus ATCC 25923 and the Gram-negative bacterium E.coli ATCC 25726. The sequence is that of Brevinin-2HSb from Odorrana hosii (Hose's rock frog).